Here is a 259-residue protein sequence, read N- to C-terminus: tRNA (guanine-N(1)-)-methyltransferase (259 aa).

S-adenosyl-L-methionine-binding positions include glycine 117 and 137-142 (LGDFVL).

This sequence belongs to the RNA methyltransferase TrmD family. As to quaternary structure, homodimer.

The protein localises to the cytoplasm. It catalyses the reaction guanosine(37) in tRNA + S-adenosyl-L-methionine = N(1)-methylguanosine(37) in tRNA + S-adenosyl-L-homocysteine + H(+). Functionally, specifically methylates guanosine-37 in various tRNAs. The polypeptide is tRNA (guanine-N(1)-)-methyltransferase (Polaromonas sp. (strain JS666 / ATCC BAA-500)).